A 431-amino-acid chain; its full sequence is Histidinol dehydrogenase (431 aa).

3 residues coordinate NAD(+): Tyr-130, Gln-191, and Asn-214. Ser-237, Gln-259, and His-262 together coordinate substrate. Residues Gln-259 and His-262 each coordinate Zn(2+). Active-site proton acceptor residues include Glu-327 and His-328. Residues His-328, Asp-361, Glu-415, and His-420 each contribute to the substrate site. Asp-361 contributes to the Zn(2+) binding site. Residue His-420 participates in Zn(2+) binding.

This sequence belongs to the histidinol dehydrogenase family. Zn(2+) is required as a cofactor.

It catalyses the reaction L-histidinol + 2 NAD(+) + H2O = L-histidine + 2 NADH + 3 H(+). It functions in the pathway amino-acid biosynthesis; L-histidine biosynthesis; L-histidine from 5-phospho-alpha-D-ribose 1-diphosphate: step 9/9. In terms of biological role, catalyzes the sequential NAD-dependent oxidations of L-histidinol to L-histidinaldehyde and then to L-histidine. This is Histidinol dehydrogenase from Rhodopseudomonas palustris (strain ATCC BAA-98 / CGA009).